Reading from the N-terminus, the 92-residue chain is Acylphosphatase (92 aa).

The region spanning R5 to F92 is the Acylphosphatase-like domain. Catalysis depends on residues R20 and N38.

It belongs to the acylphosphatase family.

It carries out the reaction an acyl phosphate + H2O = a carboxylate + phosphate + H(+). The sequence is that of Acylphosphatase (acyP) from Syntrophotalea carbinolica (strain DSM 2380 / NBRC 103641 / GraBd1) (Pelobacter carbinolicus).